A 239-amino-acid chain; its full sequence is Ribosomal RNA small subunit methyltransferase G (239 aa).

S-adenosyl-L-methionine-binding positions include G105, L110, 156–157, and R169; that span reads VE.

The protein belongs to the methyltransferase superfamily. RNA methyltransferase RsmG family.

The protein localises to the cytoplasm. It carries out the reaction guanosine(527) in 16S rRNA + S-adenosyl-L-methionine = N(7)-methylguanosine(527) in 16S rRNA + S-adenosyl-L-homocysteine. Its function is as follows. Specifically methylates the N7 position of guanine in position 527 of 16S rRNA. This Verminephrobacter eiseniae (strain EF01-2) protein is Ribosomal RNA small subunit methyltransferase G.